Here is a 157-residue protein sequence, read N- to C-terminus: Eukaryotic translation initiation factor 5A-1 (157 aa).

Position 52 is a hypusine (lysine 52). 2 positions are modified to phosphoserine: serine 75 and serine 77. Residue threonine 78 is modified to Phosphothreonine.

Belongs to the eIF-5A family. Post-translationally, lys-52 undergoes hypusination, a unique post-translational modification that consists in the addition of a butylamino group from spermidine to lysine side chain, leading to the formation of the unusual amino acid hypusine. eIF-5As are the only known proteins to undergo this modification, which is essential for their function.

The protein localises to the cytoplasm. Translation factor that promotes translation elongation and termination, particularly upon ribosome stalling at specific amino acid sequence contexts. Binds between the exit (E) and peptidyl (P) site of the ribosome and promotes rescue of stalled ribosome: specifically required for efficient translation of polyproline-containing peptides as well as other motifs that stall the ribosome. Acts as a ribosome quality control (RQC) cofactor by joining the RQC complex to facilitate peptidyl transfer during CAT tailing step. The chain is Eukaryotic translation initiation factor 5A-1 (tif51a) from Schizosaccharomyces pombe (strain 972 / ATCC 24843) (Fission yeast).